The primary structure comprises 262 residues: Ribosome maturation factor RimP (262 aa).

Residues 197-262 form a disordered region; sequence RELGVLPPPP…LGQTDPTEGD (66 aa). The segment covering 223–233 has biased composition (basic residues); the sequence is KLPKAKLKAAK. A compositionally biased stretch (basic and acidic residues) spans 240-254; that stretch reads TKEHRLAAAERKRLG.

It belongs to the RimP family.

Its subcellular location is the cytoplasm. Its function is as follows. Required for maturation of 30S ribosomal subunits. In Rhodopseudomonas palustris (strain BisB18), this protein is Ribosome maturation factor RimP.